The following is a 668-amino-acid chain: tRNA 5-methylaminomethyl-2-thiouridine biosynthesis bifunctional protein MnmC (668 aa).

Residues 1–245 are tRNA (mnm(5)s(2)U34)-methyltransferase; that stretch reads MKHYAIQPAN…KREMLCGVME (245 aa). The segment at 270–668 is FAD-dependent cmnm(5)s(2)U34 oxidoreductase; sequence IGGGIASALL…LLKGKAVKAG (399 aa).

In the N-terminal section; belongs to the methyltransferase superfamily. tRNA (mnm(5)s(2)U34)-methyltransferase family. The protein in the C-terminal section; belongs to the DAO family. It depends on FAD as a cofactor.

The protein resides in the cytoplasm. It catalyses the reaction 5-aminomethyl-2-thiouridine(34) in tRNA + S-adenosyl-L-methionine = 5-methylaminomethyl-2-thiouridine(34) in tRNA + S-adenosyl-L-homocysteine + H(+). Its function is as follows. Catalyzes the last two steps in the biosynthesis of 5-methylaminomethyl-2-thiouridine (mnm(5)s(2)U) at the wobble position (U34) in tRNA. Catalyzes the FAD-dependent demodification of cmnm(5)s(2)U34 to nm(5)s(2)U34, followed by the transfer of a methyl group from S-adenosyl-L-methionine to nm(5)s(2)U34, to form mnm(5)s(2)U34. The chain is tRNA 5-methylaminomethyl-2-thiouridine biosynthesis bifunctional protein MnmC from Escherichia coli O139:H28 (strain E24377A / ETEC).